A 418-amino-acid chain; its full sequence is Exodeoxyribonuclease 7 large subunit (418 aa).

Belongs to the XseA family. As to quaternary structure, heterooligomer composed of large and small subunits.

The protein localises to the cytoplasm. The catalysed reaction is Exonucleolytic cleavage in either 5'- to 3'- or 3'- to 5'-direction to yield nucleoside 5'-phosphates.. Functionally, bidirectionally degrades single-stranded DNA into large acid-insoluble oligonucleotides, which are then degraded further into small acid-soluble oligonucleotides. This chain is Exodeoxyribonuclease 7 large subunit, found in Acaryochloris marina (strain MBIC 11017).